The sequence spans 191 residues: Ribosomal RNA small subunit methyltransferase G (191 aa).

Residues G62, F67, 111-112 (IE), and R124 contribute to the S-adenosyl-L-methionine site.

This sequence belongs to the methyltransferase superfamily. RNA methyltransferase RsmG family.

It is found in the cytoplasm. The catalysed reaction is guanosine(527) in 16S rRNA + S-adenosyl-L-methionine = N(7)-methylguanosine(527) in 16S rRNA + S-adenosyl-L-homocysteine. In terms of biological role, specifically methylates the N7 position of guanine in position 527 of 16S rRNA. This chain is Ribosomal RNA small subunit methyltransferase G, found in Rickettsia akari (strain Hartford).